Reading from the N-terminus, the 216-residue chain is Putative flagellar filament outer layer-like protein (216 aa).

The disordered stretch occupies residues 1–22 (MFAQDAAQTGEQTTQNQGENGN). The span at 8 to 22 (QTGEQTTQNQGENGN) shows a compositional bias: low complexity.

The protein localises to the periplasmic flagellum. The protein resides in the periplasm. Its function is as follows. Might be part of the flagella. This Brachyspira hyodysenteriae (strain ATCC 49526 / WA1) protein is Putative flagellar filament outer layer-like protein (flaAL).